Consider the following 191-residue polypeptide: UPF0312 protein Sputw3181_1309 (191 aa).

A signal peptide spans 1–22 (MKKQLLSALIGVSLLVPMAASA).

The protein belongs to the UPF0312 family. Type 1 subfamily.

It is found in the periplasm. The chain is UPF0312 protein Sputw3181_1309 from Shewanella sp. (strain W3-18-1).